Reading from the N-terminus, the 82-residue chain is Small ribosomal subunit protein bS18 (82 aa).

Residues 1–20 are disordered; the sequence is MVDINQIPTRRPFHRRRKTC.

The protein belongs to the bacterial ribosomal protein bS18 family. In terms of assembly, part of the 30S ribosomal subunit. Forms a tight heterodimer with protein bS6.

Binds as a heterodimer with protein bS6 to the central domain of the 16S rRNA, where it helps stabilize the platform of the 30S subunit. This Chelativorans sp. (strain BNC1) protein is Small ribosomal subunit protein bS18.